Here is a 357-residue protein sequence, read N- to C-terminus: Neurogenic differentiation factor 1 (357 aa).

Residues 1–94 (MTKSYSESGL…GPKKKKMTKA (94 aa)) are disordered. The span at 58-78 (EEEEEDEDLEEEEEEEEEEED) shows a compositional bias: acidic residues. The segment covering 81 to 93 (PKRRGPKKKKMTK) has biased composition (basic residues). The Nuclear localization signal signature appears at 87–93 (KKKKMTK). The 53-residue stretch at 101–153 (LRRMKANARERNRMHGLNAALDNLRKVVPCYSKTQKLSKIETLRLAKNYIWAL) folds into the bHLH domain. Phosphoserine occurs at positions 162, 259, 266, and 274. S336 is subject to Phosphoserine; by CaMK2.

Efficient DNA-binding requires dimerization with another bHLH protein. Heterodimer with TCF3/E47; the heterodimer is inhibited in presence of ID2, but not NR0B2, to E-box element. Interacts with EP300; the interaction is inhibited by NR0B2. Interacts with RREB1. Interacts with ATOH8. Post-translationally, in islet cells, phosphorylated on Ser-274 upon glucose stimulation; which may be required for nuclear localization. In activated neurons, phosphorylated on Ser-336; which promotes dendritic growth. Phosphorylated by MAPK1; phosphorylation regulates heterodimerization and DNA-binding activities. Phosphorylation on Ser-266 and Ser-274 increases transactivation on the insulin promoter in glucose-stimulated insulinoma cells. As to expression, expressed in pancreatic beta cells, pulmonary neuroendocrine cells and retinal interneurons amacrine cells (at protein level). Expressed in endocrine cells of the pancreas. Expressed in the inner layer of cerebellar external granular layer (EGL). Expressed in the Ammon's horn (AH), which includes the CA1-CA3 pyramidal layer and in granule cells of the dentate gyrus (DG). Expressed in photoreceptors of the outer nuclear layer (ONL), in a subset of cells in the lower half of the inner nuclear layer (INL), and in a subset of cells in the ganglion cell layer (GCL) of the retina. Expressed in cholinergic and AII amacrine cell types. Expressed in differentiating neurons of both the central and peripheral nervous systems.

Its subcellular location is the cytoplasm. The protein resides in the nucleus. Functionally, acts as a transcriptional activator: mediates transcriptional activation by binding to E box-containing promoter consensus core sequences 5'-CANNTG-3'. Associates with the p300/CBP transcription coactivator complex to stimulate transcription of the secretin gene as well as the gene encoding the cyclin-dependent kinase inhibitor CDKN1A. Contributes to the regulation of several cell differentiation pathways, like those that promote the formation of early retinal ganglion cells, inner ear sensory neurons, granule cells forming either the cerebellum or the dentate gyrus cell layer of the hippocampus, endocrine islet cells of the pancreas and enteroendocrine cells of the small intestine. Together with PAX6 or SIX3, is required for the regulation of amacrine cell fate specification. Also required for dendrite morphogenesis and maintenance in the cerebellar cortex. Associates with chromatin to enhancer regulatory elements in genes encoding key transcriptional regulators of neurogenesis. In Mus musculus (Mouse), this protein is Neurogenic differentiation factor 1 (Neurod1).